Consider the following 130-residue polypeptide: Phosphoribosyl-AMP cyclohydrolase (130 aa).

Residue Asp77 coordinates Mg(2+). Cys78 serves as a coordination point for Zn(2+). Mg(2+) contacts are provided by Asp79 and Asp81. Zn(2+) is bound by residues Cys95 and Cys102.

Belongs to the PRA-CH family. Homodimer. The cofactor is Mg(2+). It depends on Zn(2+) as a cofactor.

It localises to the cytoplasm. It carries out the reaction 1-(5-phospho-beta-D-ribosyl)-5'-AMP + H2O = 1-(5-phospho-beta-D-ribosyl)-5-[(5-phospho-beta-D-ribosylamino)methylideneamino]imidazole-4-carboxamide. It participates in amino-acid biosynthesis; L-histidine biosynthesis; L-histidine from 5-phospho-alpha-D-ribose 1-diphosphate: step 3/9. Functionally, catalyzes the hydrolysis of the adenine ring of phosphoribosyl-AMP. In Pseudomonas putida (strain W619), this protein is Phosphoribosyl-AMP cyclohydrolase.